The sequence spans 314 residues: Ribosomal RNA large subunit methyltransferase F (314 aa).

The protein belongs to the methyltransferase superfamily. METTL16/RlmF family.

It is found in the cytoplasm. It carries out the reaction adenosine(1618) in 23S rRNA + S-adenosyl-L-methionine = N(6)-methyladenosine(1618) in 23S rRNA + S-adenosyl-L-homocysteine + H(+). In terms of biological role, specifically methylates the adenine in position 1618 of 23S rRNA. The sequence is that of Ribosomal RNA large subunit methyltransferase F from Flavobacterium psychrophilum (strain ATCC 49511 / DSM 21280 / CIP 103535 / JIP02/86).